Here is a 422-residue protein sequence, read N- to C-terminus: MTVTIENIHAREIFDSRGNPTVEVDVRLTDGTLGRAAVPSGASTGDREAVELRDGGDRLQGKGVSKAVANVNGEIYEALKGQSPFNQAKLDHLMIELDGTKNKSRLGANAILGVSMAISRAAANSEKIPLYRYLGGVDLELPQPFFNVINGGVHADSGIDVQEFLITPVKRESFRDGLEKIANIYHTLKKILADKGLETAVGDEGGFAPKLGSTENAIATLYQAIESAGYVPGEEIAIAIDPASSEFYDDKEKVYRFEGQKLTSKELLTYYENLVEKYPALISIEDGFSEHDWEGFAAQTKAQGQKIQLVGDDIFVTNPEIFKEGIKKGVANAILIKLNQIGTVTEAIEAISLARKAGYKTMISHRSGETVDSYIADFAVAMHAGQIKTGSMARSERVEKYNQFLRIEEELGKDVALASFPG.

Glutamine 162 serves as a coordination point for (2R)-2-phosphoglycerate. The Proton donor role is filled by glutamate 204. 3 residues coordinate Mg(2+): aspartate 241, glutamate 285, and aspartate 312. Residues lysine 337, arginine 366, serine 367, and lysine 388 each contribute to the (2R)-2-phosphoglycerate site. Catalysis depends on lysine 337, which acts as the Proton acceptor.

The protein belongs to the enolase family. Requires Mg(2+) as cofactor.

The protein resides in the cytoplasm. It localises to the secreted. It is found in the cell surface. The catalysed reaction is (2R)-2-phosphoglycerate = phosphoenolpyruvate + H2O. Its pathway is carbohydrate degradation; glycolysis; pyruvate from D-glyceraldehyde 3-phosphate: step 4/5. Catalyzes the reversible conversion of 2-phosphoglycerate (2-PG) into phosphoenolpyruvate (PEP). It is essential for the degradation of carbohydrates via glycolysis. In Lactococcus lactis subsp. lactis (strain IL1403) (Streptococcus lactis), this protein is Enolase 2.